The chain runs to 445 residues: MSNRKYFGTDGIRGRVGDAPITPEFVLKLGWAAGKVLARHGSRKIIIGKDTRISGYMLESALEAGLSAAGLSASFTGPMPTPAVAYLTRTFRAEAGIVISASHNPFYDNGIKFFSIDGTKLPDEVEEAIEAEMEKELTCVDSSELGKASRIVDAAGRYIEFCKGTFPNELSLSHLKIVVDCANGATYHIAPNVFRELGAKVIAIGCEPDGLNINEEVGATDVRALQARVLAEKADLGIAFDGDGDRVIMVDHEGNKVDGDQILYIIAREGLRQGQLRGGAVGTLMSNMGLELALKQLGIPFARAKVGDRYVLEKLQEKGWRIGAENSGHVILLDKTTTGDGIVASLQVVAAMVRNHMNLHDLCSGMKMFPQILVNVRFTAGKGDPLENENVKAVMAEVEAALGNRGRVLLRKSGTEPLIRVMVEGEEEAQVTEFAHRIADAVKAA.

The active-site Phosphoserine intermediate is the Ser102. Mg(2+)-binding residues include Ser102, Asp241, Asp243, and Asp245. Residue Ser102 is modified to Phosphoserine.

It belongs to the phosphohexose mutase family. Mg(2+) serves as cofactor. In terms of processing, activated by phosphorylation.

The enzyme catalyses alpha-D-glucosamine 1-phosphate = D-glucosamine 6-phosphate. Catalyzes the conversion of glucosamine-6-phosphate to glucosamine-1-phosphate. This Enterobacter sp. (strain 638) protein is Phosphoglucosamine mutase.